The chain runs to 161 residues: Nucleotide-binding protein BTH_I0730 (161 aa).

This sequence belongs to the YajQ family.

In terms of biological role, nucleotide-binding protein. The polypeptide is Nucleotide-binding protein BTH_I0730 (Burkholderia thailandensis (strain ATCC 700388 / DSM 13276 / CCUG 48851 / CIP 106301 / E264)).